Consider the following 292-residue polypeptide: Phosphatidylserine decarboxylase proenzyme (292 aa).

Residues Asp89, His146, and Ser252 each act as charge relay system; for autoendoproteolytic cleavage activity in the active site. Ser252 acts as the Schiff-base intermediate with substrate; via pyruvic acid; for decarboxylase activity in catalysis. A Pyruvic acid (Ser); by autocatalysis modification is found at Ser252.

It belongs to the phosphatidylserine decarboxylase family. PSD-B subfamily. Prokaryotic type I sub-subfamily. Heterodimer of a large membrane-associated beta subunit and a small pyruvoyl-containing alpha subunit. It depends on pyruvate as a cofactor. In terms of processing, is synthesized initially as an inactive proenzyme. Formation of the active enzyme involves a self-maturation process in which the active site pyruvoyl group is generated from an internal serine residue via an autocatalytic post-translational modification. Two non-identical subunits are generated from the proenzyme in this reaction, and the pyruvate is formed at the N-terminus of the alpha chain, which is derived from the carboxyl end of the proenzyme. The autoendoproteolytic cleavage occurs by a canonical serine protease mechanism, in which the side chain hydroxyl group of the serine supplies its oxygen atom to form the C-terminus of the beta chain, while the remainder of the serine residue undergoes an oxidative deamination to produce ammonia and the pyruvoyl prosthetic group on the alpha chain. During this reaction, the Ser that is part of the protease active site of the proenzyme becomes the pyruvoyl prosthetic group, which constitutes an essential element of the active site of the mature decarboxylase.

The protein localises to the cell membrane. The catalysed reaction is a 1,2-diacyl-sn-glycero-3-phospho-L-serine + H(+) = a 1,2-diacyl-sn-glycero-3-phosphoethanolamine + CO2. Its pathway is phospholipid metabolism; phosphatidylethanolamine biosynthesis; phosphatidylethanolamine from CDP-diacylglycerol: step 2/2. Functionally, catalyzes the formation of phosphatidylethanolamine (PtdEtn) from phosphatidylserine (PtdSer). This is Phosphatidylserine decarboxylase proenzyme from Shewanella sp. (strain MR-4).